A 497-amino-acid polypeptide reads, in one-letter code: Signal recognition particle subunit SRP54 1 (497 aa).

A G-domain region spans residues 1–295; that stretch reads MVLAQLGGSI…DVKPFVSRLL (295 aa). Residues 108–115, 190–194, and 248–251 contribute to the GTP site; these read GLQGSGKT, DTSGR, and TKLD. The interval 296 to 497 is M-domain; it reads GMGDLSGLMD…MLGGMGLGGD (202 aa).

The protein belongs to the GTP-binding SRP family. SRP54 subfamily. In terms of assembly, component of a signal recognition particle (SRP) complex that consists of a 7SL RNA molecule of 300 nucleotides and six protein subunits: SRP72, SRP68, SRP54, SRP19, SRP14 and SRP9.

The protein resides in the cytoplasm. It localises to the endoplasmic reticulum. It carries out the reaction GTP + H2O = GDP + phosphate + H(+). Component of the signal recognition particle (SRP) complex, a ribonucleoprotein complex that mediates the cotranslational targeting of secretory and membrane proteins to the endoplasmic reticulum (ER). As part of the SRP complex, associates with the SRP receptor (SR) component SRPRA to target secretory proteins to the endoplasmic reticulum membrane. Binds to the signal sequence of presecretory proteins when they emerge from the ribosomes. Displays basal GTPase activity, and stimulates reciprocal GTPase activation of the SR subunit SRPRA. Forms a guanosine 5'-triphosphate (GTP)-dependent complex with the SR subunit SRPRA. SR compaction and GTPase mediated rearrangement of SR drive SRP-mediated cotranslational protein translocation into the ER. Requires the presence of SRP9/SRP14 and/or SRP19 to stably interact with RNA. This Hordeum vulgare (Barley) protein is Signal recognition particle subunit SRP54 1 (SRP54-1).